We begin with the raw amino-acid sequence, 88 residues long: Small ribosomal subunit protein uS17 (88 aa).

The protein belongs to the universal ribosomal protein uS17 family. In terms of assembly, part of the 30S ribosomal subunit.

Functionally, one of the primary rRNA binding proteins, it binds specifically to the 5'-end of 16S ribosomal RNA. The polypeptide is Small ribosomal subunit protein uS17 (Ligilactobacillus salivarius (strain UCC118) (Lactobacillus salivarius)).